The sequence spans 278 residues: Small ribosomal subunit protein uS2 (278 aa).

A disordered region spans residues 233-257 (IDMEAAGEAPANKGKKKSVKARLDK).

It belongs to the universal ribosomal protein uS2 family.

This is Small ribosomal subunit protein uS2 from Bacteroides thetaiotaomicron (strain ATCC 29148 / DSM 2079 / JCM 5827 / CCUG 10774 / NCTC 10582 / VPI-5482 / E50).